The sequence spans 479 residues: Sulfate adenylyltransferase subunit 1 (479 aa).

The tr-type G domain maps to 25 to 239; the sequence is KSLLRFLTCG…EVLETVDIQR (215 aa). The segment at 34-41 is G1; sequence GSVDDGKS. 34 to 41 contributes to the GTP binding site; that stretch reads GSVDDGKS. The interval 92-96 is G2; the sequence is GITID. The G3 stretch occupies residues 113 to 116; the sequence is DTPG. GTP-binding positions include 113–117 and 168–171; these read DTPGH and NKMD. A G4 region spans residues 168-171; sequence NKMD. The interval 206 to 208 is G5; the sequence is SAL.

It belongs to the TRAFAC class translation factor GTPase superfamily. Classic translation factor GTPase family. CysN/NodQ subfamily. In terms of assembly, heterodimer composed of CysD, the smaller subunit, and CysN.

The enzyme catalyses sulfate + ATP + H(+) = adenosine 5'-phosphosulfate + diphosphate. The protein operates within sulfur metabolism; hydrogen sulfide biosynthesis; sulfite from sulfate: step 1/3. With CysD forms the ATP sulfurylase (ATPS) that catalyzes the adenylation of sulfate producing adenosine 5'-phosphosulfate (APS) and diphosphate, the first enzymatic step in sulfur assimilation pathway. APS synthesis involves the formation of a high-energy phosphoric-sulfuric acid anhydride bond driven by GTP hydrolysis by CysN coupled to ATP hydrolysis by CysD. The chain is Sulfate adenylyltransferase subunit 1 from Salmonella newport (strain SL254).